The sequence spans 180 residues: MQNPNNLIWIDLEMTGLEPERDVIIEMATIVTDSELNVLAEGPVIAIHQSDETLAGMDEWNTRTHGQSGLTQRVRESRIDTATAEAQTIAFLEQWVPKGKSPICGNSIGQDRRFLYKYMPALEAYFHYRYLDVSTLKILAGMWAPQVKDSFQKTATHQALDDIRESIAELKHYRQHFLKA.

An Exonuclease domain is found at 7-170 (LIWIDLEMTG…DDIRESIAEL (164 aa)). Tyr-128 is an active-site residue.

Belongs to the oligoribonuclease family.

The protein localises to the cytoplasm. 3'-to-5' exoribonuclease specific for small oligoribonucleotides. The protein is Oligoribonuclease of Ectopseudomonas mendocina (strain ymp) (Pseudomonas mendocina).